We begin with the raw amino-acid sequence, 79 residues long: RNA-binding protein Hfq (79 aa).

Residues 10–70 (DVFLNTVRKQ…ISTIMPGQPV (61 aa)) enclose the Sm domain.

This sequence belongs to the Hfq family. As to quaternary structure, homohexamer.

Functionally, RNA chaperone that binds small regulatory RNA (sRNAs) and mRNAs to facilitate mRNA translational regulation in response to envelope stress, environmental stress and changes in metabolite concentrations. Also binds with high specificity to tRNAs. The polypeptide is RNA-binding protein Hfq (Bartonella quintana (strain Toulouse) (Rochalimaea quintana)).